We begin with the raw amino-acid sequence, 1348 residues long: Phosphoribosylformylglycinamidine synthase (1348 aa).

Residues glycine 300–aspartate 311 and alanine 701 each bind ATP. Aspartate 702, glutamate 741, asparagine 745, and aspartate 941 together coordinate Mg(2+). ATP is bound at residue serine 943. In terms of domain architecture, Glutamine amidotransferase type-1 spans valine 1099–glycine 1348. Cysteine 1192 acts as the Nucleophile in catalysis. Residues histidine 1313 and glutamate 1315 contribute to the active site.

In the N-terminal section; belongs to the FGAMS family. In terms of assembly, monomer.

It is found in the cytoplasm. The enzyme catalyses N(2)-formyl-N(1)-(5-phospho-beta-D-ribosyl)glycinamide + L-glutamine + ATP + H2O = 2-formamido-N(1)-(5-O-phospho-beta-D-ribosyl)acetamidine + L-glutamate + ADP + phosphate + H(+). It functions in the pathway purine metabolism; IMP biosynthesis via de novo pathway; 5-amino-1-(5-phospho-D-ribosyl)imidazole from N(2)-formyl-N(1)-(5-phospho-D-ribosyl)glycinamide: step 1/2. Phosphoribosylformylglycinamidine synthase involved in the purines biosynthetic pathway. Catalyzes the ATP-dependent conversion of formylglycinamide ribonucleotide (FGAR) and glutamine to yield formylglycinamidine ribonucleotide (FGAM) and glutamate. This Xanthomonas axonopodis pv. citri (strain 306) protein is Phosphoribosylformylglycinamidine synthase.